The primary structure comprises 67 residues: Large ribosomal subunit protein bL35 (67 aa).

Belongs to the bacterial ribosomal protein bL35 family.

The polypeptide is Large ribosomal subunit protein bL35 (Picosynechococcus sp. (strain ATCC 27264 / PCC 7002 / PR-6) (Agmenellum quadruplicatum)).